Here is a 195-residue protein sequence, read N- to C-terminus: Guanylate kinase (195 aa).

The Guanylate kinase-like domain occupies 10–189; that stretch reads GRLIVFSAPS…TVDAVATRIA (180 aa). 17–24 is a binding site for ATP; it reads APSGTGKS.

The protein belongs to the guanylate kinase family.

The protein localises to the cytoplasm. It catalyses the reaction GMP + ATP = GDP + ADP. In terms of biological role, essential for recycling GMP and indirectly, cGMP. The chain is Guanylate kinase from Chlorobaculum tepidum (strain ATCC 49652 / DSM 12025 / NBRC 103806 / TLS) (Chlorobium tepidum).